The chain runs to 271 residues: NADPH-dependent 7-cyano-7-deazaguanine reductase (271 aa).

Residue 81-83 (IES) participates in substrate binding. An NADPH-binding site is contributed by 83 to 84 (SK). Catalysis depends on cysteine 177, which acts as the Thioimide intermediate. The active-site Proton donor is aspartate 184. Residue 216 to 217 (HE) participates in substrate binding. An NADPH-binding site is contributed by 245–246 (RG).

The protein belongs to the GTP cyclohydrolase I family. QueF type 2 subfamily. Homodimer.

Its subcellular location is the cytoplasm. The enzyme catalyses 7-aminomethyl-7-carbaguanine + 2 NADP(+) = 7-cyano-7-deazaguanine + 2 NADPH + 3 H(+). The protein operates within tRNA modification; tRNA-queuosine biosynthesis. In terms of biological role, catalyzes the NADPH-dependent reduction of 7-cyano-7-deazaguanine (preQ0) to 7-aminomethyl-7-deazaguanine (preQ1). The protein is NADPH-dependent 7-cyano-7-deazaguanine reductase of Xanthomonas axonopodis pv. citri (strain 306).